The following is a 356-amino-acid chain: Tyrosine recombinase XerS (356 aa).

A Core-binding (CB) domain is found at 16–121 (IMPWYVLEYY…ALSSLYKYLT (106 aa)). The 186-residue stretch at 169 to 354 (GFLTYIDQEY…VNDEQKNALD (186 aa)) folds into the Tyr recombinase domain. Active-site residues include Arg210, Lys234, His306, Arg309, and His332. The O-(3'-phospho-DNA)-tyrosine intermediate role is filled by Tyr341.

It belongs to the 'phage' integrase family. XerS subfamily.

It localises to the cytoplasm. FtsK is required for recombination. In terms of biological role, site-specific tyrosine recombinase, which acts by catalyzing the cutting and rejoining of the recombining DNA molecules. Essential to convert dimers of the bacterial chromosome into monomers to permit their segregation at cell division. This is Tyrosine recombinase XerS from Streptococcus pneumoniae (strain Hungary19A-6).